The primary structure comprises 261 residues: Small ribosomal subunit protein uS2 (261 aa).

Belongs to the universal ribosomal protein uS2 family.

This is Small ribosomal subunit protein uS2 from Thermodesulfovibrio yellowstonii (strain ATCC 51303 / DSM 11347 / YP87).